A 430-amino-acid chain; its full sequence is Phosphoribosylamine--glycine ligase (430 aa).

Residues 109 to 314 (RGLMNKYGID…FLTIAEHIIN (206 aa)) form the ATP-grasp domain. 136–192 (IREYPGDLAVKPTGLTGGKGVKVMGEQVDREGAVEYAMTLKDQVIILEERLLGEEFT) contributes to the ATP binding site. Positions 272, 284, and 286 each coordinate Mg(2+). The Mn(2+) site is built by Gln-272, Glu-284, and Asn-286.

The protein belongs to the GARS family. The cofactor is Mg(2+). Mn(2+) is required as a cofactor.

It carries out the reaction 5-phospho-beta-D-ribosylamine + glycine + ATP = N(1)-(5-phospho-beta-D-ribosyl)glycinamide + ADP + phosphate + H(+). It functions in the pathway purine metabolism; IMP biosynthesis via de novo pathway; N(1)-(5-phospho-D-ribosyl)glycinamide from 5-phospho-alpha-D-ribose 1-diphosphate: step 2/2. This is Phosphoribosylamine--glycine ligase from Methanocorpusculum labreanum (strain ATCC 43576 / DSM 4855 / Z).